The primary structure comprises 368 residues: Transcription factor bHLH30 (368 aa).

A coiled-coil region spans residues 3–30; the sequence is AKKEEEEEEEEDSSEAMNNIQNYQNDLF. Positions 173–222 constitute a bHLH domain; the sequence is AASKSHSEAERRRRERINNHLAKLRSILPNTTKTDKASLLAEVIQHVKEL. The tract at residues 333 to 368 is disordered; it reads KSNVEESSSSGNAKRQRMSSHNTITIVEQQQQYNQR. The segment covering 337–368 has biased composition (polar residues); sequence EESSSSGNAKRQRMSSHNTITIVEQQQQYNQR.

As to quaternary structure, homodimer. Interacts with LHW.

It localises to the nucleus. The protein is Transcription factor bHLH30 (BHLH30) of Arabidopsis thaliana (Mouse-ear cress).